The sequence spans 688 residues: Homoaconitase, mitochondrial (688 aa).

Residues Cys335, Cys395, and Cys398 each coordinate [4Fe-4S] cluster. Residues 468 to 494 (SIDLPKSSGNTGATSEEPISEDDTSEA) form a disordered region.

It belongs to the aconitase/IPM isomerase family. The cofactor is [4Fe-4S] cluster.

The protein localises to the mitochondrion. It catalyses the reaction (2R,3S)-homoisocitrate = cis-homoaconitate + H2O. The protein operates within amino-acid biosynthesis; L-lysine biosynthesis via AAA pathway; L-alpha-aminoadipate from 2-oxoglutarate: step 3/5. In terms of biological role, catalyzes the reversible hydration of cis-homoaconitate to (2R,3S)-homoisocitrate, a step in the alpha-aminoadipate pathway for lysine biosynthesis. This chain is Homoaconitase, mitochondrial (LYS4), found in Candida parapsilosis (Yeast).